A 258-amino-acid chain; its full sequence is Heat-labile enterotoxin A chain (258 aa).

Positions 1-18 (MKNITFIFFILLASPLYA) are cleaved as a signal peptide. 25-39 (RADSRPPDEIKRSGG) contributes to the NAD(+) binding site. Glu130 is a catalytic residue. Cys205 and Cys217 are oxidised to a cystine.

The protein belongs to the enterotoxin A family. In terms of assembly, heterohexamer of one A chain and of five B chains.

The biological activity of the toxin is produced by the A chain, which activates intracellular adenyl cyclase. The polypeptide is Heat-labile enterotoxin A chain (eltA) (Escherichia coli).